Reading from the N-terminus, the 288-residue chain is Pyridoxal kinase PdxY (288 aa).

Substrate-binding positions include S9 and 44–45 (TQ). The ATP site is built by D111, E148, and K181. Residue D224 coordinates substrate.

The protein belongs to the pyridoxine kinase family. PdxY subfamily. Homodimer. Requires Mg(2+) as cofactor.

It carries out the reaction pyridoxal + ATP = pyridoxal 5'-phosphate + ADP + H(+). Its pathway is cofactor metabolism; pyridoxal 5'-phosphate salvage; pyridoxal 5'-phosphate from pyridoxal: step 1/1. Pyridoxal kinase involved in the salvage pathway of pyridoxal 5'-phosphate (PLP). Catalyzes the phosphorylation of pyridoxal to PLP. This Haemophilus influenzae (strain PittEE) protein is Pyridoxal kinase PdxY.